A 148-amino-acid polypeptide reads, in one-letter code: Protein-export protein SecB (148 aa).

This sequence belongs to the SecB family. Homotetramer, a dimer of dimers. One homotetramer interacts with 1 SecA dimer.

Its subcellular location is the cytoplasm. One of the proteins required for the normal export of preproteins out of the cell cytoplasm. It is a molecular chaperone that binds to a subset of precursor proteins, maintaining them in a translocation-competent state. It also specifically binds to its receptor SecA. The sequence is that of Protein-export protein SecB from Psychrobacter arcticus (strain DSM 17307 / VKM B-2377 / 273-4).